The primary structure comprises 424 residues: Enolase (424 aa).

Residue Gln-163 participates in (2R)-2-phosphoglycerate binding. Glu-205 serves as the catalytic Proton donor. Residues Asp-242, Glu-285, and Asp-312 each coordinate Mg(2+). 4 residues coordinate (2R)-2-phosphoglycerate: Lys-337, Arg-366, Ser-367, and Lys-388. Catalysis depends on Lys-337, which acts as the Proton acceptor.

It belongs to the enolase family. It depends on Mg(2+) as a cofactor.

The protein localises to the cytoplasm. It localises to the secreted. It is found in the cell surface. It catalyses the reaction (2R)-2-phosphoglycerate = phosphoenolpyruvate + H2O. It functions in the pathway carbohydrate degradation; glycolysis; pyruvate from D-glyceraldehyde 3-phosphate: step 4/5. Its function is as follows. Catalyzes the reversible conversion of 2-phosphoglycerate (2-PG) into phosphoenolpyruvate (PEP). It is essential for the degradation of carbohydrates via glycolysis. The protein is Enolase of Roseobacter denitrificans (strain ATCC 33942 / OCh 114) (Erythrobacter sp. (strain OCh 114)).